The following is a 597-amino-acid chain: Exochitinase 1 (597 aa).

A signal peptide (or 32) is located at residues 1–29; sequence MDRFRPLAVLIAAALTLSGTTALSSAARA. Residues 172 to 253 enclose the Fibronectin type-III domain; sequence PPTGLRTGSV…ATVTATTAPG (82 aa). One can recognise a GH18 domain in the interval 264–597; the sequence is HALVGYLHAS…FQRTFDGYFG (334 aa). The active-site Proton donor is Glu384.

This sequence belongs to the glycosyl hydrolase 18 family. Chitinase class II subfamily. Post-translationally, the N-terminus is blocked.

The catalysed reaction is Random endo-hydrolysis of N-acetyl-beta-D-glucosaminide (1-&gt;4)-beta-linkages in chitin and chitodextrins.. With respect to regulation, inhibited by the pseudosugar allosamidin A. Its function is as follows. Exochitinase that generates exclusively chitobiose from chitotetraose, chitohexaose, and colloidal high-molecular mass chitin. The chain is Exochitinase 1 (chi01) from Streptomyces olivaceoviridis (Streptomyces corchorusii).